The primary structure comprises 142 residues: Hemoglobin subunit alpha-B (142 aa).

A Globin domain is found at 2 to 142 (VLSPTDKSNV…VSTVLTSKYR (141 aa)). H59 serves as a coordination point for O2. H88 provides a ligand contact to heme b.

Belongs to the globin family. As to quaternary structure, heterotetramer of two alpha chains and two beta chains. Red blood cells.

Involved in oxygen transport from the lung to the various peripheral tissues. The sequence is that of Hemoglobin subunit alpha-B (HBAB) from Otolemur crassicaudatus (Brown greater galago).